A 286-amino-acid chain; its full sequence is Phosphatidylserine decarboxylase proenzyme (286 aa).

Residues Asp-90, His-147, and Ser-252 each act as charge relay system; for autoendoproteolytic cleavage activity in the active site. The Schiff-base intermediate with substrate; via pyruvic acid; for decarboxylase activity role is filled by Ser-252. A Pyruvic acid (Ser); by autocatalysis modification is found at Ser-252.

This sequence belongs to the phosphatidylserine decarboxylase family. PSD-B subfamily. Prokaryotic type I sub-subfamily. As to quaternary structure, heterodimer of a large membrane-associated beta subunit and a small pyruvoyl-containing alpha subunit. Requires pyruvate as cofactor. Post-translationally, is synthesized initially as an inactive proenzyme. Formation of the active enzyme involves a self-maturation process in which the active site pyruvoyl group is generated from an internal serine residue via an autocatalytic post-translational modification. Two non-identical subunits are generated from the proenzyme in this reaction, and the pyruvate is formed at the N-terminus of the alpha chain, which is derived from the carboxyl end of the proenzyme. The autoendoproteolytic cleavage occurs by a canonical serine protease mechanism, in which the side chain hydroxyl group of the serine supplies its oxygen atom to form the C-terminus of the beta chain, while the remainder of the serine residue undergoes an oxidative deamination to produce ammonia and the pyruvoyl prosthetic group on the alpha chain. During this reaction, the Ser that is part of the protease active site of the proenzyme becomes the pyruvoyl prosthetic group, which constitutes an essential element of the active site of the mature decarboxylase.

It is found in the cell membrane. The enzyme catalyses a 1,2-diacyl-sn-glycero-3-phospho-L-serine + H(+) = a 1,2-diacyl-sn-glycero-3-phosphoethanolamine + CO2. It participates in phospholipid metabolism; phosphatidylethanolamine biosynthesis; phosphatidylethanolamine from CDP-diacylglycerol: step 2/2. In terms of biological role, catalyzes the formation of phosphatidylethanolamine (PtdEtn) from phosphatidylserine (PtdSer). This Azotobacter vinelandii (strain DJ / ATCC BAA-1303) protein is Phosphatidylserine decarboxylase proenzyme.